We begin with the raw amino-acid sequence, 710 residues long: Prolyl endopeptidase (710 aa).

At Met-1 the chain carries N-acetylmethionine. Position 157 is an N6-acetyllysine (Lys-157). Residues Ser-554, Asp-641, and His-680 each act as charge relay system in the active site.

This sequence belongs to the peptidase S9A family. In terms of tissue distribution, expressed in all tissues tested: uterus, kidney, heart, lung, small intestine, smooth muscle, liver, spleen, thymus, adrenal, pituitary and whole brain.

It localises to the cytoplasm. It carries out the reaction Hydrolysis of Pro-|-Xaa &gt;&gt; Ala-|-Xaa in oligopeptides.. With respect to regulation, inhibited by DFP, Z-Pro-prolinal and poststatin, but not by PMSF, SBTI, EDTA, leupeptin, E-64 and pepstatin. Functionally, cleaves peptide bonds on the C-terminal side of prolyl residues within peptides that are up to approximately 30 amino acids long. Has high activity on the succinyl- (suc-) peptide-4-methylcoumaryl-7-amide (MCA) substrates suc-Gly-Pro-Leu-Gly-Pro-MCA, suc-Gly-Pro-MCA and suc-Ala-Ala-Ala-MCA. The sequence is that of Prolyl endopeptidase from Rattus norvegicus (Rat).